A 302-amino-acid chain; its full sequence is Quinolinate synthase (302 aa).

Residues His-24 and Ser-41 each coordinate iminosuccinate. Cys-86 provides a ligand contact to [4Fe-4S] cluster. Residues 112–114 (YVN) and Ser-129 each bind iminosuccinate. Cys-171 is a [4Fe-4S] cluster binding site. Iminosuccinate is bound by residues 197-199 (HPE) and Thr-214. Cys-259 provides a ligand contact to [4Fe-4S] cluster.

Belongs to the quinolinate synthase family. Type 2 subfamily. Requires [4Fe-4S] cluster as cofactor.

Its subcellular location is the cytoplasm. The enzyme catalyses iminosuccinate + dihydroxyacetone phosphate = quinolinate + phosphate + 2 H2O + H(+). It functions in the pathway cofactor biosynthesis; NAD(+) biosynthesis; quinolinate from iminoaspartate: step 1/1. Functionally, catalyzes the condensation of iminoaspartate with dihydroxyacetone phosphate to form quinolinate. The polypeptide is Quinolinate synthase (Dehalococcoides mccartyi (strain ATCC BAA-2100 / JCM 16839 / KCTC 5957 / BAV1)).